A 70-amino-acid chain; its full sequence is Gas vesicle protein A (70 aa).

The protein belongs to the gas vesicle GvpA family. As to quaternary structure, the gas vesicle shell is 2 nm thick and consists of a single layer of this protein. It forms helical ribs nearly perpendicular to the long axis of the vesicle.

The protein localises to the gas vesicle shell. Functionally, gas vesicles are hollow, gas filled proteinaceous nanostructures found in some microorganisms. During planktonic growth they allow positioning of the organism at a favorable depth for light or nutrient acquisition. GvpA forms the protein shell. This chain is Gas vesicle protein A, found in Ancylobacter aquaticus.